The chain runs to 79 residues: Acyl carrier protein (79 aa).

Residues 2–79 (ASKEEILAGL…QDAVDFIXGA (78 aa)) form the Carrier domain. Ser-40 is modified (O-(pantetheine 4'-phosphoryl)serine).

This sequence belongs to the acyl carrier protein (ACP) family. 4'-phosphopantetheine is transferred from CoA to a specific serine of apo-ACP by AcpS. This modification is essential for activity because fatty acids are bound in thioester linkage to the sulfhydryl of the prosthetic group.

The protein resides in the cytoplasm. It participates in lipid metabolism; fatty acid biosynthesis. Carrier of the growing fatty acid chain in fatty acid biosynthesis. The polypeptide is Acyl carrier protein (Myxococcus xanthus).